The chain runs to 198 residues: NAD(P)H dehydrogenase (quinone) (198 aa).

The 186-residue stretch at 4 to 189 (VLVLYYSMYG…SIARYQGEYV (186 aa)) folds into the Flavodoxin-like domain. FMN is bound by residues 10 to 15 (SMYGHI) and 78 to 80 (TRF). Residue Y12 coordinates NAD(+). W98 contacts substrate. Residues 113-118 (STGTGG) and H133 each bind FMN.

It belongs to the WrbA family. FMN is required as a cofactor.

The catalysed reaction is a quinone + NADH + H(+) = a quinol + NAD(+). It catalyses the reaction a quinone + NADPH + H(+) = a quinol + NADP(+). The polypeptide is NAD(P)H dehydrogenase (quinone) (Shigella dysenteriae serotype 1 (strain Sd197)).